The primary structure comprises 447 residues: N-succinylarginine dihydrolase (447 aa).

Residues 19-28 (AGLSFGNEAS), asparagine 110, and 137-138 (HR) each bind substrate. Glutamate 174 is a catalytic residue. Arginine 212 provides a ligand contact to substrate. Histidine 248 is a catalytic residue. Substrate is bound by residues aspartate 250 and asparagine 359. The Nucleophile role is filled by cysteine 365.

It belongs to the succinylarginine dihydrolase family. As to quaternary structure, homodimer.

The catalysed reaction is N(2)-succinyl-L-arginine + 2 H2O + 2 H(+) = N(2)-succinyl-L-ornithine + 2 NH4(+) + CO2. Its pathway is amino-acid degradation; L-arginine degradation via AST pathway; L-glutamate and succinate from L-arginine: step 2/5. Functionally, catalyzes the hydrolysis of N(2)-succinylarginine into N(2)-succinylornithine, ammonia and CO(2). The polypeptide is N-succinylarginine dihydrolase (Escherichia coli (strain SE11)).